The primary structure comprises 166 residues: Crossover junction endodeoxyribonuclease RuvC (166 aa).

Residues Asp7, Glu68, and Asp141 contribute to the active site. Residues Asp7, Glu68, and Asp141 each contribute to the Mg(2+) site.

The protein belongs to the RuvC family. As to quaternary structure, homodimer which binds Holliday junction (HJ) DNA. The HJ becomes 2-fold symmetrical on binding to RuvC with unstacked arms; it has a different conformation from HJ DNA in complex with RuvA. In the full resolvosome a probable DNA-RuvA(4)-RuvB(12)-RuvC(2) complex forms which resolves the HJ. Mg(2+) is required as a cofactor.

It localises to the cytoplasm. The enzyme catalyses Endonucleolytic cleavage at a junction such as a reciprocal single-stranded crossover between two homologous DNA duplexes (Holliday junction).. In terms of biological role, the RuvA-RuvB-RuvC complex processes Holliday junction (HJ) DNA during genetic recombination and DNA repair. Endonuclease that resolves HJ intermediates. Cleaves cruciform DNA by making single-stranded nicks across the HJ at symmetrical positions within the homologous arms, yielding a 5'-phosphate and a 3'-hydroxyl group; requires a central core of homology in the junction. The consensus cleavage sequence is 5'-(A/T)TT(C/G)-3'. Cleavage occurs on the 3'-side of the TT dinucleotide at the point of strand exchange. HJ branch migration catalyzed by RuvA-RuvB allows RuvC to scan DNA until it finds its consensus sequence, where it cleaves and resolves the cruciform DNA. The protein is Crossover junction endodeoxyribonuclease RuvC of Koribacter versatilis (strain Ellin345).